Consider the following 288-residue polypeptide: Short chain aldehyde dehydrogenase 1 (288 aa).

NAD(+)-binding positions include Ser26 to Ile28, Asp47, Asp72 to Val73, and Asn99 to Gly101. Ser153 serves as the catalytic Proton donor. Residues Ser153 and Tyr166 each contribute to the substrate site. NAD(+) is bound by residues Tyr166, Lys170, and Thr201. Tyr166 (proton acceptor) is an active-site residue. Lys170 acts as the Proton donor/acceptor in catalysis.

It belongs to the short-chain dehydrogenases/reductases (SDR) family. As to quaternary structure, homodimer. As to expression, expressed in mature seeds.

It catalyses the reaction 4,5,8-trihydroxycasbene + 2 NAD(+) = jolkinol C + 2 NADH + 2 H(+). It carries out the reaction a secondary alcohol + NAD(+) = a ketone + NADH + H(+). The enzyme catalyses a primary alcohol + NAD(+) = an aldehyde + NADH + H(+). It participates in secondary metabolite biosynthesis; terpenoid biosynthesis. Involved in the biosynthesis of macrocyclic lathyrane type diterpenoids (also called Euphorbia factors) natural products, including the cyclization route from casbene to jolkinol C, a precursor for ingenol mebutate that is used to treat actinic keratosis, a precancerous skin condition. Catalyzes the conversion of 4,5,8-trihydroxycasbene into jolkinol C in presence of NAD. Also mediates the formation of casbene dione derivative and 4-ketocasbene from 4-hydroxy-8-ketocasbene and 4-hydroxycasbene, respectively. Together with CYP71D445, triggers the biosynthesis of 8-ketocasbene from 8-hydroxycasbene. In Euphorbia lathyris (Caper spurge), this protein is Short chain aldehyde dehydrogenase 1.